We begin with the raw amino-acid sequence, 105 residues long: MEVDILSEDENSMLHRTDIQFEIAHEDATPSRLSVRDSLAAKINKDSDEVVVHKLDTKFGMRKTIGYAKVYDSPQSARQVEQDYMLKRNKIEIESEDEDSAAEGA.

It belongs to the eukaryotic ribosomal protein eS24 family.

The protein is Small ribosomal subunit protein eS24 of Haloquadratum walsbyi (strain DSM 16790 / HBSQ001).